We begin with the raw amino-acid sequence, 60 residues long: MSKGTPSMGKMNKMTHIACRRCGRISFHAQKKVCSSCGFGRSTKMQSFKWDTKRPKTPTH.

Positions 19, 22, 34, and 37 each coordinate Zn(2+). Residues 19-37 (CRRCGRISFHAQKKVCSSC) form a C4-type zinc finger.

It belongs to the eukaryotic ribosomal protein eL37 family. Requires Zn(2+) as cofactor.

Binds to the 23S rRNA. The protein is Large ribosomal subunit protein eL37 of Methanoregula boonei (strain DSM 21154 / JCM 14090 / 6A8).